Here is a 161-residue protein sequence, read N- to C-terminus: Regulator of ribonuclease activity A (161 aa).

It belongs to the RraA family. In terms of assembly, homotrimer. Binds to both RNA-binding sites in the C-terminal region of Rne and to RhlB.

It localises to the cytoplasm. In terms of biological role, globally modulates RNA abundance by binding to RNase E (Rne) and regulating its endonucleolytic activity. Can modulate Rne action in a substrate-dependent manner by altering the composition of the degradosome. Modulates RNA-binding and helicase activities of the degradosome. The polypeptide is Regulator of ribonuclease activity A (Shigella dysenteriae serotype 1 (strain Sd197)).